A 424-amino-acid chain; its full sequence is D-inositol 3-phosphate glycosyltransferase (424 aa).

His-21 provides a ligand contact to 1D-myo-inositol 3-phosphate. Residues 27-28 (QP) and Gly-35 contribute to the UDP-N-acetyl-alpha-D-glucosamine site. 1D-myo-inositol 3-phosphate contacts are provided by residues 32-37 (DAGGMN), Lys-90, Tyr-123, Thr-147, and Arg-167. UDP-N-acetyl-alpha-D-glucosamine is bound by residues Arg-241, Lys-246, and Gln-299. Residues Phe-308, Gln-309, and Ala-311 each coordinate Mg(2+). UDP-N-acetyl-alpha-D-glucosamine contacts are provided by Glu-321 and Glu-329. Thr-335 provides a ligand contact to Mg(2+).

This sequence belongs to the glycosyltransferase group 1 family. MshA subfamily. Homodimer.

It carries out the reaction 1D-myo-inositol 3-phosphate + UDP-N-acetyl-alpha-D-glucosamine = 1D-myo-inositol 2-acetamido-2-deoxy-alpha-D-glucopyranoside 3-phosphate + UDP + H(+). Catalyzes the transfer of a N-acetyl-glucosamine moiety to 1D-myo-inositol 3-phosphate to produce 1D-myo-inositol 2-acetamido-2-deoxy-glucopyranoside 3-phosphate in the mycothiol biosynthesis pathway. The sequence is that of D-inositol 3-phosphate glycosyltransferase from Mycobacterium avium (strain 104).